Here is a 414-residue protein sequence, read N- to C-terminus: 3-aminobutyryl-CoA aminotransferase (414 aa).

An N6-(pyridoxal phosphate)lysine modification is found at Lys261.

The protein belongs to the class-III pyridoxal-phosphate-dependent aminotransferase family. As to quaternary structure, homodimer. Requires pyridoxal 5'-phosphate as cofactor.

It catalyses the reaction (3S)-3-aminobutanoyl-CoA + 2-oxoglutarate = acetoacetyl-CoA + L-glutamate. The protein operates within amino-acid degradation; L-lysine degradation via acetate pathway. In terms of biological role, 3-aminobutyryl-CoA aminotransferase that acts specifically on coenzyme A (CoA) esters and catalyzes the conversion of 3-aminobutyryl-CoA into acetoacetyl-CoA in an alternative pathway of lysine fermentation. The polypeptide is 3-aminobutyryl-CoA aminotransferase (kat) (Cloacimonas acidaminovorans (strain Evry)).